Reading from the N-terminus, the 1429-residue chain is Alpha-agarase (1429 aa).

The first 26 residues, 1 to 26 (MFKTKRSLLNSSIAISFAVLGVQAQA), serve as a signal peptide directing secretion. 2 consecutive CBM6 domains span residues 29–161 (LELQ…FRLT) and 211–345 (FVIQ…LTFT). Disordered stretches follow at residues 349–400 (SDGG…DGVS) and 474–495 (NTPA…GEPG). Polar residues predominate over residues 369–378 (SSDSCPNTPT). One can recognise a PA14 domain in the interval 490-638 (NGGEPGDSYY…GGTNFVHPSN (149 aa)). The CBM6 3 domain maps to 662 to 793 (IYIQLEDFDE…QWSGDLVRLA (132 aa)).

It belongs to the glycosyl hydrolase 96 family. In terms of assembly, homodimer. Ca(2+) serves as cofactor.

The enzyme catalyses Endohydrolysis of 1,3-alpha-L-galactosidic linkages in agarose, yielding agarotetraose as the major product.. Its function is as follows. Alpha-agarase. Does not hydrolyze agarotetraose, agarohexaose, kappa-carrageenan, iota-carrageenan or lambda-carrageenan. The chain is Alpha-agarase from Alteromonas agarilytica.